Here is a 192-residue protein sequence, read N- to C-terminus: UPF0316 protein SSP0880 (192 aa).

A run of 3 helical transmembrane segments spans residues 8–28 (PWLM…CLTM), 40–60 (VAAI…GMVM), and 66–86 (IQNV…GMKI).

This sequence belongs to the UPF0316 family.

It is found in the cell membrane. This Staphylococcus saprophyticus subsp. saprophyticus (strain ATCC 15305 / DSM 20229 / NCIMB 8711 / NCTC 7292 / S-41) protein is UPF0316 protein SSP0880.